A 74-amino-acid chain; its full sequence is Kappa-stichotoxin-Sgt4a (74 aa).

The signal sequence occupies residues 1–22; sequence MKFQVIAAVLLIEFCLCVVVTA. The propeptide occupies 23 to 39; sequence RMELQDVEDVENGFQKR. The ShKT domain occupies 42 to 74; the sequence is CIDTIPQSRCTAFQCKHSMKYRLSFCRKTCGTC. Intrachain disulfides connect Cys42–Cys74, Cys51–Cys67, and Cys56–Cys71.

This sequence belongs to the sea anemone type 1 potassium channel toxin family. Type 1a subfamily.

The protein resides in the secreted. Its subcellular location is the nematocyst. Its function is as follows. Inhibits voltage-gated potassium channels (Kv) with higher potency for Kv1.1/KCNA1 and Kv1.3/KCNA3. The sequence is that of Kappa-stichotoxin-Sgt4a from Stichodactyla gigantea (Giant carpet anemone).